The sequence spans 139 residues: Protein Turandot B (139 aa).

An N-terminal signal peptide occupies residues 1-21; it reads MNFKTALICFALLLIGTLCSA.

This sequence belongs to the Turandot family.

It is found in the secreted. Functionally, a humoral factor that may play a role in stress tolerance. The polypeptide is Protein Turandot B (Drosophila simulans (Fruit fly)).